Here is a 286-residue protein sequence, read N- to C-terminus: 4-hydroxybenzoate octaprenyltransferase (286 aa).

The next 7 helical transmembrane spans lie at 21–40 (GTLL…AGGM), 96–116 (LFVI…GLVV), 142–162 (FLGV…TGEV), 167–187 (WWLF…YAMV), 210–230 (QIIG…GWSA), 235–255 (LYGL…MLIF), and 266–286 (FLNN…DYLF).

The protein belongs to the UbiA prenyltransferase family. Mg(2+) serves as cofactor.

It localises to the cell inner membrane. It catalyses the reaction all-trans-octaprenyl diphosphate + 4-hydroxybenzoate = 4-hydroxy-3-(all-trans-octaprenyl)benzoate + diphosphate. It functions in the pathway cofactor biosynthesis; ubiquinone biosynthesis. In terms of biological role, catalyzes the prenylation of para-hydroxybenzoate (PHB) with an all-trans polyprenyl group. Mediates the second step in the final reaction sequence of ubiquinone-8 (UQ-8) biosynthesis, which is the condensation of the polyisoprenoid side chain with PHB, generating the first membrane-bound Q intermediate 3-octaprenyl-4-hydroxybenzoate. This is 4-hydroxybenzoate octaprenyltransferase from Shewanella sp. (strain MR-4).